A 310-amino-acid chain; its full sequence is Ribosomal RNA small subunit methyltransferase H (310 aa).

S-adenosyl-L-methionine is bound by residues 32–34 (AGH), Asp51, Phe84, Asp102, and Gln109.

Belongs to the methyltransferase superfamily. RsmH family.

The protein localises to the cytoplasm. The enzyme catalyses cytidine(1402) in 16S rRNA + S-adenosyl-L-methionine = N(4)-methylcytidine(1402) in 16S rRNA + S-adenosyl-L-homocysteine + H(+). Its function is as follows. Specifically methylates the N4 position of cytidine in position 1402 (C1402) of 16S rRNA. The chain is Ribosomal RNA small subunit methyltransferase H from Campylobacter hominis (strain ATCC BAA-381 / DSM 21671 / CCUG 45161 / LMG 19568 / NCTC 13146 / CH001A).